The chain runs to 854 residues: Armadillo repeat-containing protein 2 (854 aa).

3 disordered regions span residues Met1 to Lys116, Gln140 to Thr194, and Glu206 to Thr255. Over residues Pro58–Ser73 the composition is skewed to low complexity. Composition is skewed to polar residues over residues Leu74–Ile87 and Lys162–Leu187. 12 ARM repeats span residues Thr255–Glu294, Met298–Val337, Glu356–Phe396, Pro401–Val442, Pro455–Ser496, Asp499–Ala540, Gln544–Pro583, Ala585–Pro605, Arg606–Phe649, Gln651–Gln692, His694–Val733, and Lys735–Glu777.

Required for sperm flagellum axoneme organization and function. Involved in axonemal central pair complex assembly and/or stability. The sequence is that of Armadillo repeat-containing protein 2 from Mus musculus (Mouse).